We begin with the raw amino-acid sequence, 323 residues long: Phosphate acyltransferase (323 aa).

Belongs to the PlsX family. As to quaternary structure, homodimer. Probably interacts with PlsY.

It is found in the cytoplasm. It catalyses the reaction a fatty acyl-[ACP] + phosphate = an acyl phosphate + holo-[ACP]. Its pathway is lipid metabolism; phospholipid metabolism. Functionally, catalyzes the reversible formation of acyl-phosphate (acyl-PO(4)) from acyl-[acyl-carrier-protein] (acyl-ACP). This enzyme utilizes acyl-ACP as fatty acyl donor, but not acyl-CoA. The sequence is that of Phosphate acyltransferase from Finegoldia magna (strain ATCC 29328 / DSM 20472 / WAL 2508) (Peptostreptococcus magnus).